The chain runs to 467 residues: UDP-N-acetylmuramate--L-alanine ligase (467 aa).

Gly-114–Thr-120 provides a ligand contact to ATP.

The protein belongs to the MurCDEF family.

The protein resides in the cytoplasm. It catalyses the reaction UDP-N-acetyl-alpha-D-muramate + L-alanine + ATP = UDP-N-acetyl-alpha-D-muramoyl-L-alanine + ADP + phosphate + H(+). It functions in the pathway cell wall biogenesis; peptidoglycan biosynthesis. Cell wall formation. The polypeptide is UDP-N-acetylmuramate--L-alanine ligase (Bradyrhizobium sp. (strain ORS 278)).